Reading from the N-terminus, the 264-residue chain is Glutamate racemase (264 aa).

Residues Asp10–Ser11 and Tyr42–Gly43 each bind substrate. The active-site Proton donor/acceptor is Cys73. A substrate-binding site is contributed by Asn74–Thr75. Cys181 functions as the Proton donor/acceptor in the catalytic mechanism. Residue Thr182–His183 coordinates substrate.

The protein belongs to the aspartate/glutamate racemases family.

The enzyme catalyses L-glutamate = D-glutamate. It functions in the pathway cell wall biogenesis; peptidoglycan biosynthesis. In terms of biological role, provides the (R)-glutamate required for cell wall biosynthesis. This Thermoanaerobacter pseudethanolicus (strain ATCC 33223 / 39E) (Clostridium thermohydrosulfuricum) protein is Glutamate racemase.